Here is a 282-residue protein sequence, read N- to C-terminus: NADPH-dependent 7-cyano-7-deazaguanine reductase (282 aa).

88–90 (IES) contacts substrate. 90-91 (SK) is a binding site for NADPH. The active-site Thioimide intermediate is the C190. The active-site Proton donor is D197. Residue 229-230 (HE) coordinates substrate. 258–259 (RG) serves as a coordination point for NADPH.

It belongs to the GTP cyclohydrolase I family. QueF type 2 subfamily. In terms of assembly, homodimer.

The protein resides in the cytoplasm. The enzyme catalyses 7-aminomethyl-7-carbaguanine + 2 NADP(+) = 7-cyano-7-deazaguanine + 2 NADPH + 3 H(+). Its pathway is tRNA modification; tRNA-queuosine biosynthesis. In terms of biological role, catalyzes the NADPH-dependent reduction of 7-cyano-7-deazaguanine (preQ0) to 7-aminomethyl-7-deazaguanine (preQ1). This chain is NADPH-dependent 7-cyano-7-deazaguanine reductase, found in Escherichia coli O45:K1 (strain S88 / ExPEC).